The primary structure comprises 236 residues: Probable transcriptional regulatory protein Suden_1389 (236 aa).

This sequence belongs to the TACO1 family.

Its subcellular location is the cytoplasm. The polypeptide is Probable transcriptional regulatory protein Suden_1389 (Sulfurimonas denitrificans (strain ATCC 33889 / DSM 1251) (Thiomicrospira denitrificans (strain ATCC 33889 / DSM 1251))).